We begin with the raw amino-acid sequence, 126 residues long: Small ribosomal subunit protein uS12 (126 aa).

The span at 1 to 16 (MPTVNQLVRQGRTMNK) shows a compositional bias: polar residues. Positions 1-24 (MPTVNQLVRQGRTMNKTKTKSPAL) are disordered. D89 is subject to 3-methylthioaspartic acid.

This sequence belongs to the universal ribosomal protein uS12 family. As to quaternary structure, part of the 30S ribosomal subunit. Contacts proteins S8 and S17. May interact with IF1 in the 30S initiation complex.

Its function is as follows. With S4 and S5 plays an important role in translational accuracy. Functionally, interacts with and stabilizes bases of the 16S rRNA that are involved in tRNA selection in the A site and with the mRNA backbone. Located at the interface of the 30S and 50S subunits, it traverses the body of the 30S subunit contacting proteins on the other side and probably holding the rRNA structure together. The combined cluster of proteins S8, S12 and S17 appears to hold together the shoulder and platform of the 30S subunit. The chain is Small ribosomal subunit protein uS12 from Elusimicrobium minutum (strain Pei191).